Consider the following 561-residue polypeptide: Putative transport protein KPK_3686 (561 aa).

The next 5 helical transmembrane spans lie at 8 to 28, 37 to 57, 66 to 86, 94 to 114, and 158 to 178; these read LLNG…LCLG, LGNS…HFAI, FMLF…SIFF, MLAL…GKVF, and HLSL…IVGA. 2 RCK C-terminal domains span residues 202-288 and 292-373; these read LDTD…SFRN and VFDR…RIGF. Transmembrane regions (helical) follow at residues 383-403, 406-426, 447-467, 478-498, and 540-560; these read LLAF…TFQF, FSFG…LGFL, FGLM…INNG, AGLI…AYVL, and AIAN…WPGL.

Belongs to the AAE transporter (TC 2.A.81) family. YbjL subfamily.

The protein localises to the cell membrane. The protein is Putative transport protein KPK_3686 of Klebsiella pneumoniae (strain 342).